A 210-amino-acid chain; its full sequence is Synaptosomal-associated protein 23 (210 aa).

Met1 carries the N-acetylmethionine modification. Residues Ser5, Ser20, Ser23, and Ser34 each carry the phosphoserine modification. One can recognise a t-SNARE coiled-coil homology 1 domain in the interval 14-76 (HQVTDESLES…REAEKTLTEL (63 aa)). A coiled-coil region spans residues 23 to 76 (STRRILGLAIESQDAGIKTITMLDEQGEQLNRIEEGMDQINKDMREAEKTLTEL). 5 S-palmitoyl cysteine lipidation sites follow: Cys79, Cys80, Cys83, Cys85, and Cys87. A disordered region spans residues 104 to 135 (GDGGDNSPSNVVSKQPSRITNGQPQQTTGAAS). Polar residues predominate over residues 109-133 (NSPSNVVSKQPSRITNGQPQQTTGA). Phosphoserine is present on residues Ser110 and Ser160. The 63-residue stretch at 145–207 (DAREDEMEEN…DIANTRAKKL (63 aa)) folds into the t-SNARE coiled-coil homology 2 domain.

Belongs to the SNAP-25 family. As to quaternary structure, homotetramer (via coiled-coil domain), also forms heterotetramers with STX4 and VAMP3. Found in a complex with VAMP8 and STX1A. Found in a complex with VAMP8 and STX4 in pancreas. Interacts simultaneously with SNAPIN and SYN4. Interacts with STX1A. Interacts with STX12. Interacts tightly to multiple syntaxins and synaptobrevins/VAMPs. Interacts with ZDHHC13 (via ANK repeats). Interacts with ZDHHC17 (via ANK repeats). Post-translationally, (Microbial infection) Targeted and hydrolyzed by C.botulinum neurotoxin type A (BoNT/A, botA) which hydrolyzes the 202-Thr-|-Arg-203 bond; the in vitro reaction is not highly efficient. In terms of processing, (Microbial infection) Targeted and hydrolyzed by C.botulinum neurotoxin type E (BoNT/E) which hydrolyzes the 185-Arg-|-Ile-186 bond; the in vitro reaction is more efficient than that of BoNT/A. In terms of tissue distribution, expressed in non-neuronal tissues.

Its subcellular location is the cell membrane. The protein localises to the synapse. It is found in the synaptosome. Functionally, essential component of the high affinity receptor for the general membrane fusion machinery and an important regulator of transport vesicle docking and fusion. This Mus musculus (Mouse) protein is Synaptosomal-associated protein 23 (Snap23).